The following is a 138-amino-acid chain: uncharacterized protein (138 aa).

Residues 1–27 (MEGELIENNGLDIYDTSETPKKRGRPA) are disordered.

This is an uncharacterized protein from Escherichia coli (strain K12).